The chain runs to 818 residues: Beta-glucosidase (818 aa).

The active site involves D222. The PA14 domain maps to 386-538 (VFSGEMTVEY…GDAGIAEAVE (153 aa)).

The protein belongs to the glycosyl hydrolase 3 family.

It is found in the cytoplasm. The enzyme catalyses Hydrolysis of terminal, non-reducing beta-D-glucosyl residues with release of beta-D-glucose.. Its function is as follows. Involved in modifying a vir-inducing plant signal molecule. Hydrolyzes coniferin but not cellobiose. The protein is Beta-glucosidase (cbg-1) of Rhizobium radiobacter (Agrobacterium tumefaciens).